The primary structure comprises 386 residues: Putative nickel insertion protein (386 aa).

It belongs to the LarC family.

This Dictyoglomus thermophilum (strain ATCC 35947 / DSM 3960 / H-6-12) protein is Putative nickel insertion protein.